A 478-amino-acid chain; its full sequence is MSNGAPFPLDYRGTRNYGPRFIPDRYSTFVSSARKSPRTPPGGSDQVVHVNDAGVYKRTFAVASPFPKSEFFYSSVGVGDAIGAMTDTKKHRVRRSILGPRLRAKAIAPYTPSLQKLVIACMDIMAGKARQGKVINLLRYTRALTVDVISDFTFGRPMGVVNEAEEMPDLLNDLEVFGRHFHILKHFPISRKLLDIIPESFARKLMPLPGFFELREKATTAVNEAVVERQAGKTISNNTDGASFLDLLLNQIDENPSVLVDEGCAFITGGSDTTGFTMENATYLILSHPHILQSLLQELDTSPHIRDTFDLDHILRLPFLTAIIKETLRLYTPAPSPLPRTVPAEGIDVHGHFLPGGTILTHSLYLIHHNPVLFADPKSFKPERWLGTQGKVLEQYYVPFSKGSRSCIGMALAYHEVYTYLSLLFSRFEMEIFETSQSDMDWREHFFVKRNGQLRIRIVRDRWTGEAFPTRAVEADLR.

Cysteine 407 lines the heme pocket.

The protein belongs to the cytochrome P450 family. Requires heme as cofactor.

It participates in secondary metabolite biosynthesis. The protein operates within alkaloid biosynthesis. It functions in the pathway mycotoxin biosynthesis. In terms of biological role, cytochrome P450 monooxygenase; part of the gene cluster that mediates the biosynthesis of the aspoquinolone mycotoxins. The role of asqL within the aspoquinolone pathway has still to be determined. The first step of the pathway is catalyzed by the nonribosomal peptide synthetase asqK that condenses anthranilic acid and O-methyl-L-tyrosine to produce 4'-methoxycyclopeptin. 4'-methoxycyclopeptin is then converted to 4'-methoxydehydrocyclopeptin by the ketoglutarate-dependent dioxygenase asqJ. AsqJ also converts its first product 4'-methoxydehydrocyclopeptin to 4'-methoxycyclopenin. The following conversion of 4'-methoxycyclopenin into 4'-methoxyviridicatin is catalyzed by the cyclopenase asqI. 4'-methoxyviridicatin is the precursor of quinolone natural products, and is further converted to quinolinone B. The prenyltransferase asqH1 then catalyzes the canonical Friedel-Crafts alkylation of quinolinone B with dimethylallyl cation to yield dimethylallyl quinolone, which is subjected to FAD-dependent dehydrogenation by the FAD-linked oxidoreductase asqF to yield conjugated aryl diene. The delta(3') double bond then serves as the site of the second alkylation with DMAPP catalyzed by the prenyltransferase asqH2 to yield a carbenium ion intermediate, which can be attacked by H(2)O to yield a styrenyl quinolone containing a C3'-hydroxyprenyl chain. The FAD-dependent monooxygenase asqG performs epoxidation of the terminal C7'-C8' olefin. Finally, after dehydratation of the epoxide at C3 by asqC, the quinolone epoxide rearrangement protein asqO catalyzes an enzymatic 3-exo-tet cyclization to yield the cyclopropyl-THF ring system in aspoquinolone. The sequence is that of Cytochrome P450 monooxygenase asqL from Emericella nidulans (strain FGSC A4 / ATCC 38163 / CBS 112.46 / NRRL 194 / M139) (Aspergillus nidulans).